A 1103-amino-acid polypeptide reads, in one-letter code: PALM2-AKAP2 fusion protein (1103 aa).

Disordered stretches follow at residues 178 to 197 and 304 to 396; these read ESASNATETSGPDMTIKKPP and YNGT…SSRD. Positions 179 to 189 are enriched in polar residues; it reads SASNATETSGP. A phosphoserine mark is found at S322, S352, and S383. The span at 380–392 shows a compositional bias: low complexity; the sequence is VPVSPSSTTSSRC. Residue K405 forms a Glycyl lysine isopeptide (Lys-Gly) (interchain with G-Cter in SUMO1); alternate linkage. K405 is covalently cross-linked (Glycyl lysine isopeptide (Lys-Gly) (interchain with G-Cter in SUMO2); alternate). The stretch at 444-521 forms a coiled coil; that stretch reads EEMLELEKER…QKQLQQQQQQ (78 aa). 2 disordered regions span residues 483–544 and 566–662; these read EQLD…DKAK and NSRQ…SKLW. Residues 490–505 show a composition bias toward basic and acidic residues; sequence LESHKKYKERKERRAQ. Positions 506 to 521 are enriched in low complexity; it reads QEQLLLQKQLQQQQQQ. The segment covering 522-531 has biased composition (polar residues); it reads PPSQLCTAPA. Positions 533–544 are enriched in basic and acidic residues; the sequence is SHERASMIDKAK. Polar residues predominate over residues 566-579; it reads NSRQAVAKGQSTPR. S567 and S624 each carry phosphoserine. The span at 633 to 643 shows a compositional bias: polar residues; it reads AAGSQGNTASQ. Phosphoserine occurs at positions 692, 696, and 748. The segment covering 745-763 has biased composition (polar residues); sequence QENSLADFSLPQTPQTDNP. The disordered stretch occupies residues 745–794; that stretch reads QENSLADFSLPQTPQTDNPSEGRGEGVSKSFSDHGFYSPSSTLGDSPLVD. T757 carries the post-translational modification Phosphothreonine. Positions 797–810 are PKA-RII subunit binding domain; that stretch reads LEYQAGLLVQNAIQ. Positions 817–829 are enriched in basic and acidic residues; the sequence is VDKAVSKTSRDGA. Positions 817-907 are disordered; it reads VDKAVSKTSR…GPINMEETRP (91 aa). S862 is modified (phosphoserine). Residues 865 to 886 are compositionally biased toward basic and acidic residues; it reads QEKRDVLPKILPAEDRALRERG. Residues 941–979 adopt a coiled-coil conformation; the sequence is KLRSRKQRTLSMIEEEIRAAQEREEELKRQRQVLQSTQS. A phosphoserine mark is found at S951, S979, S1009, and S1016. A disordered region spans residues 962 to 1035; the sequence is EREEELKRQR…AAGTQRPKNL (74 aa). Over residues 976-990 the composition is skewed to polar residues; the sequence is STQSPRTKNAPSLPS.

Expressed in infantile heart and muscle, and fibroblasts.

It localises to the apical cell membrane. Binds to regulatory subunit (RII) of protein kinase A. May be involved in establishing polarity in signaling systems or in integrating PKA-RII isoforms with downstream effectors to capture, amplify and focus diffuse, trans-cellular signals carried by cAMP. Binds to and modulates the structure of the actin cytoskeleton. The sequence is that of PALM2-AKAP2 fusion protein from Homo sapiens (Human).